Consider the following 445-residue polypeptide: tRNA-2-methylthio-N(6)-dimethylallyladenosine synthase (445 aa).

Positions 3-124 (KKLYIKTYGC…LPELISKVVR (122 aa)) constitute an MTTase N-terminal domain. Residues Cys-12, Cys-48, Cys-87, Cys-162, Cys-166, and Cys-169 each coordinate [4Fe-4S] cluster. Residues 148 to 380 (YPQGASSFIS…QQELTAQQLA (233 aa)) form the Radical SAM core domain. The 63-residue stretch at 383–445 (ESCVGSIMKV…ASNSLTGEVI (63 aa)) folds into the TRAM domain.

This sequence belongs to the methylthiotransferase family. MiaB subfamily. As to quaternary structure, monomer. [4Fe-4S] cluster is required as a cofactor.

Its subcellular location is the cytoplasm. The catalysed reaction is N(6)-dimethylallyladenosine(37) in tRNA + (sulfur carrier)-SH + AH2 + 2 S-adenosyl-L-methionine = 2-methylsulfanyl-N(6)-dimethylallyladenosine(37) in tRNA + (sulfur carrier)-H + 5'-deoxyadenosine + L-methionine + A + S-adenosyl-L-homocysteine + 2 H(+). Functionally, catalyzes the methylthiolation of N6-(dimethylallyl)adenosine (i(6)A), leading to the formation of 2-methylthio-N6-(dimethylallyl)adenosine (ms(2)i(6)A) at position 37 in tRNAs that read codons beginning with uridine. The polypeptide is tRNA-2-methylthio-N(6)-dimethylallyladenosine synthase (Rickettsia felis (strain ATCC VR-1525 / URRWXCal2) (Rickettsia azadi)).